Here is a 297-residue protein sequence, read N- to C-terminus: METAQQLDKPALDTNDAARDKAINEQVTMTQDTPYPDQTVGNPFVDDPKMRLRDVEVFYDDNQAIHGVSLDIGKNEVVSLIGPSGCGKSTFLRCLNRMNDTIDICKVKGSLHLESQDLYDPKLDVVELRARVGMVFQKPNPFPKSIYDNVAYGPRIHGLANKKYDLDEIVETSLRKAGLWEEVKDRLHAPGTGLSGGQQQRLCIARTIAVSPEVVLMDEPCSALDPIATAKIEELISELSESYTIAIVTHSMQQAARVSSRTAYFHLGRLVEMNDTETVFTKPEHDLTEAYITGRFG.

The ABC transporter domain occupies 50–292; sequence MRLRDVEVFY…PEHDLTEAYI (243 aa). 82–89 provides a ligand contact to ATP; that stretch reads GPSGCGKS.

Belongs to the ABC transporter superfamily. Phosphate importer (TC 3.A.1.7) family. As to quaternary structure, the complex is composed of two ATP-binding proteins (PstB), two transmembrane proteins (PstC and PstA) and a solute-binding protein (PstS).

It localises to the cell inner membrane. The catalysed reaction is phosphate(out) + ATP + H2O = ADP + 2 phosphate(in) + H(+). Functionally, part of the ABC transporter complex PstSACB involved in phosphate import. Responsible for energy coupling to the transport system. This is Phosphate import ATP-binding protein PstB from Alcanivorax borkumensis (strain ATCC 700651 / DSM 11573 / NCIMB 13689 / SK2).